A 240-amino-acid polypeptide reads, in one-letter code: Lectin (240 aa).

Positions 127 and 129 each coordinate Mn(2+). Residues Asp129, Tyr131, Asn133, and Asp138 each coordinate Ca(2+). Mn(2+)-binding residues include Asp138 and His143.

It belongs to the leguminous lectin family. In terms of assembly, heterotetramer of two alpha and two beta chains; disulfide bond linked.

Binds preferentially to oligosaccharides bearing the sequence Man-alpha-1-&gt;2 Man-alpha-1-&gt;6 Man-alpha-1-&gt;6Man found in early steps of glycoprotein processing in the endoplasmic reticulum. It binds weakly to highly processed oligosaccharide structures. The protein is Lectin of Leucomphalos mildbraedii (Bowringia mildbraedii).